The primary structure comprises 88 residues: Actobindin (88 aa).

At Met1 the chain carries N-acetylmethionine. The interval 1–22 (MNPELQSAIGQGAALKHAETVD) is disordered. Lys35 is subject to N6,N6,N6-trimethyllysine. The WH2 domain occupies 37 to 54 (DRSSFLEEVAKPHELKHA). Lys72 is modified (N6,N6,N6-trimethyllysine).

In terms of assembly, monomer.

Is able to bind two actin monomers at high concentrations of G-actin. The protein is Actobindin of Acanthamoeba castellanii (Amoeba).